The following is a 161-amino-acid chain: FAD synthase (161 aa).

ATP-binding positions include 19–20 (TF), 24–27 (HPGH), Asp-106, and Tyr-133.

This sequence belongs to the archaeal FAD synthase family. As to quaternary structure, homodimer. A divalent metal cation serves as cofactor.

It catalyses the reaction FMN + ATP + H(+) = FAD + diphosphate. Its pathway is cofactor biosynthesis; FAD biosynthesis; FAD from FMN: step 1/1. Its function is as follows. Catalyzes the transfer of the AMP portion of ATP to flavin mononucleotide (FMN) to produce flavin adenine dinucleotide (FAD) coenzyme. This Methanothermobacter marburgensis (strain ATCC BAA-927 / DSM 2133 / JCM 14651 / NBRC 100331 / OCM 82 / Marburg) (Methanobacterium thermoautotrophicum) protein is FAD synthase.